The chain runs to 193 residues: Putative histone H2B type 2-C (193 aa).

Low complexity predominate over residues 1 to 12 (MPEPAKFAPAPK). Residues 1-33 (MPEPAKFAPAPKKGSKKAVTKAQKKDGKKRKRS) form a disordered region. Proline 2 bears the N-acetylproline mark. Lysine 6 is subject to N6-(2-hydroxyisobutyryl)lysine; alternate. An N6-(beta-hydroxybutyryl)lysine; alternate mark is found at lysine 6 and lysine 12. Lysine 6, lysine 12, and lysine 13 each carry N6-acetyllysine; alternate. Lysine 6 bears the N6-butyryllysine; alternate mark. N6-crotonyllysine; alternate is present on residues lysine 6, lysine 12, and lysine 13. 2 positions are modified to N6-lactoyllysine; alternate: lysine 6 and lysine 12. Residue lysine 6 forms a Glycyl lysine isopeptide (Lys-Gly) (interchain with G-Cter in SUMO2); alternate linkage. Lysine 13 is modified (N6-(2-hydroxyisobutyryl)lysine; alternate). Serine 15 is modified (phosphoserine; by STK4/MST1). 4 positions are modified to N6-acetyllysine; alternate: lysine 16, lysine 17, lysine 21, and lysine 24. 4 positions are modified to N6-crotonyllysine; alternate: lysine 16, lysine 17, lysine 21, and lysine 24. Lysine 16, lysine 17, lysine 21, and lysine 24 each carry N6-lactoyllysine; alternate. Residues lysine 17 and lysine 21 each carry the N6-(beta-hydroxybutyryl)lysine; alternate modification. Lysine 17 carries the post-translational modification N6-glutaryllysine; alternate. An N6-(2-hydroxyisobutyryl)lysine; alternate mark is found at lysine 21 and lysine 24. The residue at position 21 (lysine 21) is an N6-butyryllysine; alternate. Residue lysine 21 forms a Glycyl lysine isopeptide (Lys-Gly) (interchain with G-Cter in SUMO2); alternate linkage. Residue lysine 25 is modified to N6-(2-hydroxyisobutyryl)lysine. N6-(2-hydroxyisobutyryl)lysine; alternate is present on lysine 35. Lysine 35 is subject to N6-(beta-hydroxybutyryl)lysine; alternate. Lysine 35 is subject to N6-crotonyllysine; alternate. Position 35 is an N6-glutaryllysine; alternate (lysine 35). Lysine 35 is subject to N6-succinyllysine; alternate. Lysine 35 is covalently cross-linked (Glycyl lysine isopeptide (Lys-Gly) (interchain with G-Cter in ubiquitin); alternate). Position 37 is a phosphoserine; by AMPK (serine 37). N6-(2-hydroxyisobutyryl)lysine; alternate is present on residues lysine 44, lysine 47, and lysine 58. Lysine 44 carries the N6-lactoyllysine; alternate modification. An N6-glutaryllysine; alternate mark is found at lysine 44 and lysine 47. The residue at position 47 (lysine 47) is an N6-methyllysine; alternate. Residue lysine 58 is modified to N6,N6-dimethyllysine; alternate. A Dimethylated arginine modification is found at arginine 80. An N6-(2-hydroxyisobutyryl)lysine; alternate modification is found at lysine 86. Lysine 86 carries the post-translational modification N6-(beta-hydroxybutyryl)lysine; alternate. Lysine 86 is modified (N6-acetyllysine; alternate). N6-lactoyllysine; alternate is present on lysine 86. Residue lysine 86 is modified to N6,N6,N6-trimethyllysine; alternate. 2 positions are modified to omega-N-methylarginine: arginine 87 and arginine 93. Residues 111–136 (PCPRAPRRSPSTPAPSESLPGPGARS) are disordered.

This sequence belongs to the histone H2B family. As to quaternary structure, the nucleosome is a histone octamer containing two molecules each of H2A, H2B, H3 and H4 assembled in one H3-H4 heterotetramer and two H2A-H2B heterodimers. The octamer wraps approximately 147 bp of DNA. Phosphorylation at Ser-37 (H2BS36ph) by AMPK in response to stress promotes transcription. Phosphorylated on Ser-15 (H2BS14ph) by STK4/MST1 during apoptosis; which facilitates apoptotic chromatin condensation. Also phosphorylated on Ser-15 in response to DNA double strand breaks (DSBs), and in correlation with somatic hypermutation and immunoglobulin class-switch recombination. Post-translationally, crotonylation (Kcr) is specifically present in male germ cells and marks testis-specific genes in post-meiotic cells, including X-linked genes that escape sex chromosome inactivation in haploid cells. Crotonylation marks active promoters and enhancers and confers resistance to transcriptional repressors. It is also associated with post-meiotically activated genes on autosomes. In terms of processing, lactylated in macrophages by EP300/P300 by using lactoyl-CoA directly derived from endogenous or exogenous lactate, leading to stimulates gene transcription.

It localises to the nucleus. The protein localises to the chromosome. Core component of nucleosome. Nucleosomes wrap and compact DNA into chromatin, limiting DNA accessibility to the cellular machineries which require DNA as a template. Histones thereby play a central role in transcription regulation, DNA repair, DNA replication and chromosomal stability. DNA accessibility is regulated via a complex set of post-translational modifications of histones, also called histone code, and nucleosome remodeling. The sequence is that of Putative histone H2B type 2-C from Homo sapiens (Human).